The sequence spans 355 residues: MCELLGICFNKKVNVELSLNSFKHRSEDHPNGWGIAFYPDGFVRVIKEPIKMNEALLAECVRWTKIKSNIFIAHIRKASAGSESYVNTHPFVRKLEDKEIAFAHNGTLLGYEDLELDGYYPIGETDSEYVFCYLLSQIEKREIEWNKEGFDEMLDILLDINYYGAFNCLFSDGEYLFAYKDYRGRRELHFLKRKPPYGRIRLEDEDYIINLGDVKSVREEGFIIATNPLTNEDWKSFENGELMVFKNGEMIYSNKRLTDLELKILKILRESPHRVSLKKIIENLEYLSRNIRHDASVVRIGIRSLLDKGYIKQDSRDTVNWDDLEATFYTKPEKRVEIDKRLKGFRWRRNRIIMS.

Cys2 acts as the For GATase activity in catalysis. In terms of domain architecture, Glutamine amidotransferase type-2 spans 2–248 (CELLGICFNK…NGELMVFKNG (247 aa)).

This is an uncharacterized protein from Methanocaldococcus jannaschii (strain ATCC 43067 / DSM 2661 / JAL-1 / JCM 10045 / NBRC 100440) (Methanococcus jannaschii).